A 212-amino-acid polypeptide reads, in one-letter code: Ras-related protein Rab-15 (212 aa).

Residues S17, G18, V19, G20, K21, T22, C23, S35, S39, and T40 each contribute to the GTP site. T22 serves as a coordination point for Mg(2+). 2 short sequence motifs (switch) span residues 31–45 and 63–80; these read NEFH…GVDF and DTAG…YYRR. Positions 40 and 63 each coordinate Mg(2+). G66, N121, K122, D124, S151, and A152 together coordinate GTP. The interval 193–212 is disordered; sequence LEEEEGKPEGPANSSKTCWC. 2 S-geranylgeranyl cysteine lipidation sites follow: C210 and C212. At C212 the chain carries Cysteine methyl ester.

This sequence belongs to the small GTPase superfamily. Rab family. In terms of assembly, the GTP bound form of RAB15 interacts with REP15. Interacts (GTP-bound form) with MICAL1, MICAL3, MICALCL, EHBP1 and EHBP1L1. Mg(2+) is required as a cofactor.

It localises to the cell membrane. The enzyme catalyses GTP + H2O = GDP + phosphate + H(+). With respect to regulation, regulated by guanine nucleotide exchange factors (GEFs) which promote the exchange of bound GDP for free GTP. Regulated by GTPase activating proteins (GAPs) which increase the GTP hydrolysis activity. Inhibited by GDP dissociation inhibitors (GDIs). Functionally, the small GTPases Rab are key regulators of intracellular membrane trafficking, from the formation of transport vesicles to their fusion with membranes. Rabs cycle between an inactive GDP-bound form and an active GTP-bound form that is able to recruit to membranes different sets of downstream effectors directly responsible for vesicle formation, movement, tethering and fusion. RAB15 may act in concert with RAB3A in regulating aspects of synaptic vesicle membrane flow within the nerve terminal. The polypeptide is Ras-related protein Rab-15 (Homo sapiens (Human)).